Here is a 253-residue protein sequence, read N- to C-terminus: 3-deoxy-manno-octulosonate cytidylyltransferase (253 aa).

Belongs to the KdsB family.

The protein resides in the cytoplasm. The catalysed reaction is 3-deoxy-alpha-D-manno-oct-2-ulosonate + CTP = CMP-3-deoxy-beta-D-manno-octulosonate + diphosphate. Its pathway is nucleotide-sugar biosynthesis; CMP-3-deoxy-D-manno-octulosonate biosynthesis; CMP-3-deoxy-D-manno-octulosonate from 3-deoxy-D-manno-octulosonate and CTP: step 1/1. It functions in the pathway bacterial outer membrane biogenesis; lipopolysaccharide biosynthesis. In terms of biological role, activates KDO (a required 8-carbon sugar) for incorporation into bacterial lipopolysaccharide in Gram-negative bacteria. The polypeptide is 3-deoxy-manno-octulosonate cytidylyltransferase (Haemophilus ducreyi (strain 35000HP / ATCC 700724)).